Consider the following 132-residue polypeptide: Small ribosomal subunit protein uS9 (132 aa).

It belongs to the universal ribosomal protein uS9 family.

The sequence is that of Small ribosomal subunit protein uS9 (rps9) from Thermoplasma volcanium (strain ATCC 51530 / DSM 4299 / JCM 9571 / NBRC 15438 / GSS1).